We begin with the raw amino-acid sequence, 1024 residues long: Multidrug resistance protein MdtC (1024 aa).

Helical transmembrane passes span Val-12–Leu-32, Glu-333–Leu-353, Leu-360–Cys-380, Leu-387–Leu-407, Val-435–Leu-455, Val-469–Leu-489, Trp-528–Pro-548, Leu-853–Ser-873, Val-875–Leu-895, Leu-897–Val-917, Pro-953–Gly-973, and Ile-984–Ile-1004.

This sequence belongs to the resistance-nodulation-cell division (RND) (TC 2.A.6) family. MdtC subfamily. As to quaternary structure, part of a tripartite efflux system composed of MdtA, MdtB and MdtC. MdtC forms a heteromultimer with MdtB.

It localises to the cell inner membrane. In Yersinia pestis bv. Antiqua (strain Antiqua), this protein is Multidrug resistance protein MdtC.